Here is a 172-residue protein sequence, read N- to C-terminus: MAIHKWKLWKQRCSTCSDALSTTTTVEQLSNTPTTNPLTTCVGAKEAQTQQRKRQRLTEPDSSTISPLSVDNTNNQIHCGSGSTNTGGHQSATQTAFIVHLKGDTNCLKCFRYRFTKHKGLYKNVSSTWHWTSNTKTGIVTIVFDSAHQRETFIKTIKVPPSVTLSLGIMTL.

The tract at residues 45–69 is disordered; sequence KEAQTQQRKRQRLTEPDSSTISPLS. Positions 60–69 are enriched in polar residues; the sequence is PDSSTISPLS.

It belongs to the papillomaviridae E8^E2C protein family.

It localises to the host nucleus. In terms of biological role, plays a role in limiting the replication of viral DNA in keratinocytes. Recruits the host NCoR/SMRT complex to viral replication foci to mediate repression of both viral replication and transcription. The polypeptide is Protein E8^E2C (Homo sapiens (Human)).